The following is a 339-amino-acid chain: tRNA N6-adenosine threonylcarbamoyltransferase (339 aa).

Fe cation is bound by residues H111 and H115. Substrate is bound by residues 139–143 (LVSGG), D172, G185, D189, and N280. Position 308 (D308) interacts with Fe cation.

This sequence belongs to the KAE1 / TsaD family. Fe(2+) serves as cofactor.

It localises to the cytoplasm. It catalyses the reaction L-threonylcarbamoyladenylate + adenosine(37) in tRNA = N(6)-L-threonylcarbamoyladenosine(37) in tRNA + AMP + H(+). Required for the formation of a threonylcarbamoyl group on adenosine at position 37 (t(6)A37) in tRNAs that read codons beginning with adenine. Is involved in the transfer of the threonylcarbamoyl moiety of threonylcarbamoyl-AMP (TC-AMP) to the N6 group of A37, together with TsaE and TsaB. TsaD likely plays a direct catalytic role in this reaction. The chain is tRNA N6-adenosine threonylcarbamoyltransferase from Bacteroides thetaiotaomicron (strain ATCC 29148 / DSM 2079 / JCM 5827 / CCUG 10774 / NCTC 10582 / VPI-5482 / E50).